A 417-amino-acid polypeptide reads, in one-letter code: Creatine kinase U-type, mitochondrial (417 aa).

A mitochondrion-targeting transit peptide spans 1 to 39; the sequence is MAGPFSRLLSARPGLRLLALAGAGSLAAGFLLRPEPVRA. A cardiolipin-binding region spans residues 40 to 64; sequence ASERRRLYPPSAEYPDLRKHNNCMA. One can recognise a Phosphagen kinase N-terminal domain in the interval 45 to 131; that stretch reads RLYPPSAEYP…FDPVIQERHN (87 aa). Ser-151 is modified (phosphoserine). Residues 158–400 enclose the Phosphagen kinase C-terminal domain; it reads YVLSSRVRTG…NYLIDCERRL (243 aa). 161 to 165 is a binding site for ATP; sequence SSRVR. The residue at position 196 (Ser-196) is a Phosphoserine. Thr-213 is modified (phosphothreonine). ATP is bound at residue His-224. Ser-232 is subject to Phosphoserine. ATP contacts are provided by residues Arg-269, Arg-325, 353–358, and Asp-368; that span reads RGTGGV. A Phosphothreonine modification is found at Thr-355.

This sequence belongs to the ATP:guanido phosphotransferase family. In terms of assembly, exists as an octamer composed of four MTCK homodimers.

The protein resides in the mitochondrion inner membrane. It carries out the reaction creatine + ATP = N-phosphocreatine + ADP + H(+). In terms of biological role, reversibly catalyzes the transfer of phosphate between ATP and various phosphogens (e.g. creatine phosphate). Creatine kinase isoenzymes play a central role in energy transduction in tissues with large, fluctuating energy demands, such as skeletal muscle, heart, brain and spermatozoa. The polypeptide is Creatine kinase U-type, mitochondrial (CKMT1A) (Homo sapiens (Human)).